Reading from the N-terminus, the 163-residue chain is Cytochrome b6-f complex subunit 4 (163 aa).

3 helical membrane passes run 36–56, 95–115, and 131–151; these read LLYI…GLAV, LLGV…PFLE, and TVFL…TLPI.

Belongs to the cytochrome b family. PetD subfamily. As to quaternary structure, the 4 large subunits of the cytochrome b6-f complex are cytochrome b6, subunit IV (17 kDa polypeptide, petD), cytochrome f and the Rieske protein, while the 4 small subunits are petG, petL, petM and petN. The complex functions as a dimer.

It is found in the plastid. The protein resides in the chloroplast thylakoid membrane. Its function is as follows. Component of the cytochrome b6-f complex, which mediates electron transfer between photosystem II (PSII) and photosystem I (PSI), cyclic electron flow around PSI, and state transitions. This Pelargonium hortorum (Common geranium) protein is Cytochrome b6-f complex subunit 4.